Consider the following 610-residue polypeptide: ABC transporter ATP-binding protein/permease wht-3 (610 aa).

The 236-residue stretch at 42 to 277 (VKTRKKLFSK…FADCGHPIPK (236 aa)) folds into the ABC transporter domain. Residue 74 to 81 (GASGAGKT) coordinates ATP. A run of 5 helical transmembrane segments spans residues 396–416 (ALYFLIAELTFSTMFGIMTFM), 446–466 (LPLFTIDGALMIVISYWMIGL), 477–497 (ILISVLVEQSATSCGLFLACL), 503–523 (LAIAFAVPASGLFALLSGLYG), and 584–604 (VIGLCSIVIFFYLAGYIALFI).

The protein belongs to the ABC transporter superfamily. ABCG family. Eye pigment precursor importer (TC 3.A.1.204) subfamily.

Its subcellular location is the membrane. Functionally, required for efficient RNA interference (RNAi) of pop-1 indicating a role in the germline development. The sequence is that of ABC transporter ATP-binding protein/permease wht-3 (wht-3) from Caenorhabditis elegans.